Consider the following 214-residue polypeptide: UPF0301 protein NFA_55110 (214 aa).

The tract at residues Met-1–Phe-24 is disordered.

Belongs to the UPF0301 (AlgH) family.

This Nocardia farcinica (strain IFM 10152) protein is UPF0301 protein NFA_55110.